A 582-amino-acid chain; its full sequence is Phosphoribosylaminoimidazole carboxylase (582 aa).

The ATP-grasp domain maps to 114 to 305 (KKYLAEKGVA…QFENHLRAIL (192 aa)). 143-200 (AGRLGLPLMLKAKTLAYDGRGNSPLKSTSSEDIQASLKFLGDRPLYAEGWAPFVKEVA) provides a ligand contact to ATP.

This sequence in the C-terminal section; belongs to the AIR carboxylase family. Class I subfamily.

The enzyme catalyses 5-amino-1-(5-phospho-D-ribosyl)imidazole-4-carboxylate + H(+) = 5-amino-1-(5-phospho-beta-D-ribosyl)imidazole + CO2. The protein operates within purine metabolism; IMP biosynthesis via de novo pathway; 5-amino-1-(5-phospho-D-ribosyl)imidazole-4-carboxylate from 5-amino-1-(5-phospho-D-ribosyl)imidazole (carboxylase route): step 1/1. This chain is Phosphoribosylaminoimidazole carboxylase (ADE2), found in Cryptococcus neoformans var. grubii serotype A (strain H99 / ATCC 208821 / CBS 10515 / FGSC 9487) (Filobasidiella neoformans var. grubii).